The chain runs to 335 residues: Tetraacyldisaccharide 4'-kinase (335 aa).

51-58 (HVGGAGKT) is a binding site for ATP.

Belongs to the LpxK family.

The enzyme catalyses a lipid A disaccharide + ATP = a lipid IVA + ADP + H(+). It participates in glycolipid biosynthesis; lipid IV(A) biosynthesis; lipid IV(A) from (3R)-3-hydroxytetradecanoyl-[acyl-carrier-protein] and UDP-N-acetyl-alpha-D-glucosamine: step 6/6. Transfers the gamma-phosphate of ATP to the 4'-position of a tetraacyldisaccharide 1-phosphate intermediate (termed DS-1-P) to form tetraacyldisaccharide 1,4'-bis-phosphate (lipid IVA). The protein is Tetraacyldisaccharide 4'-kinase of Bradyrhizobium sp. (strain ORS 278).